A 359-amino-acid chain; its full sequence is Alanine racemase, biosynthetic (359 aa).

Lys-34 (proton acceptor; specific for D-alanine) is an active-site residue. An N6-(pyridoxal phosphate)lysine modification is found at Lys-34. An N6-carboxylysine modification is found at Lys-122. Arg-129 is a binding site for substrate. Catalysis depends on Tyr-255, which acts as the Proton acceptor; specific for L-alanine. Met-303 contributes to the substrate binding site.

This sequence belongs to the alanine racemase family. In terms of assembly, homodimer. It depends on pyridoxal 5'-phosphate as a cofactor.

The catalysed reaction is L-alanine = D-alanine. The protein operates within amino-acid biosynthesis; D-alanine biosynthesis; D-alanine from L-alanine: step 1/1. It functions in the pathway cell wall biogenesis; peptidoglycan biosynthesis. Its function is as follows. Catalyzes the interconversion of L-alanine and D-alanine. Provides the D-alanine required for cell wall biosynthesis. The protein is Alanine racemase, biosynthetic of Escherichia coli (strain K12).